The chain runs to 101 residues: ATP synthase subunit c (101 aa).

Transmembrane regions (helical) follow at residues 31–51 (AFAY…GAGQ) and 81–101 (AISE…IFVG).

It belongs to the ATPase C chain family. F-type ATPases have 2 components, F(1) - the catalytic core - and F(0) - the membrane proton channel. F(1) has five subunits: alpha(3), beta(3), gamma(1), delta(1), epsilon(1). F(0) has three main subunits: a(1), b(2) and c(10-14). The alpha and beta chains form an alternating ring which encloses part of the gamma chain. F(1) is attached to F(0) by a central stalk formed by the gamma and epsilon chains, while a peripheral stalk is formed by the delta and b chains.

The protein localises to the cell membrane. In terms of biological role, f(1)F(0) ATP synthase produces ATP from ADP in the presence of a proton or sodium gradient. F-type ATPases consist of two structural domains, F(1) containing the extramembraneous catalytic core and F(0) containing the membrane proton channel, linked together by a central stalk and a peripheral stalk. During catalysis, ATP synthesis in the catalytic domain of F(1) is coupled via a rotary mechanism of the central stalk subunits to proton translocation. Key component of the F(0) channel; it plays a direct role in translocation across the membrane. A homomeric c-ring of between 10-14 subunits forms the central stalk rotor element with the F(1) delta and epsilon subunits. This Mesomycoplasma hyopneumoniae (strain 7448) (Mycoplasma hyopneumoniae) protein is ATP synthase subunit c.